The primary structure comprises 370 residues: D-alanine--D-alanine ligase (370 aa).

The ATP-grasp domain maps to 144 to 352; sequence KKIFADAGIP…YGALIERLVD (209 aa). 177-232 lines the ATP pocket; that stretch reads EEVLTYPVFVKPANLGSSVGISKATNKTELIEAMTEAFLYDRRVVVEQGVVAREIE. Positions 306, 319, and 321 each coordinate Mg(2+).

Belongs to the D-alanine--D-alanine ligase family. The cofactor is Mg(2+). Mn(2+) serves as cofactor.

It is found in the cytoplasm. It carries out the reaction 2 D-alanine + ATP = D-alanyl-D-alanine + ADP + phosphate + H(+). It functions in the pathway cell wall biogenesis; peptidoglycan biosynthesis. Cell wall formation. This Listeria innocua serovar 6a (strain ATCC BAA-680 / CLIP 11262) protein is D-alanine--D-alanine ligase.